A 122-amino-acid polypeptide reads, in one-letter code: Large ribosomal subunit protein uL14 (122 aa).

This sequence belongs to the universal ribosomal protein uL14 family. Part of the 50S ribosomal subunit. Forms a cluster with proteins L3 and L19. In the 70S ribosome, L14 and L19 interact and together make contacts with the 16S rRNA in bridges B5 and B8.

Binds to 23S rRNA. Forms part of two intersubunit bridges in the 70S ribosome. The protein is Large ribosomal subunit protein uL14 of Pediococcus pentosaceus (strain ATCC 25745 / CCUG 21536 / LMG 10740 / 183-1w).